The primary structure comprises 872 residues: Alanine--tRNA ligase (872 aa).

Zn(2+)-binding residues include His563, His567, Cys665, and His669.

This sequence belongs to the class-II aminoacyl-tRNA synthetase family. Zn(2+) serves as cofactor.

It localises to the cytoplasm. The catalysed reaction is tRNA(Ala) + L-alanine + ATP = L-alanyl-tRNA(Ala) + AMP + diphosphate. Functionally, catalyzes the attachment of alanine to tRNA(Ala) in a two-step reaction: alanine is first activated by ATP to form Ala-AMP and then transferred to the acceptor end of tRNA(Ala). Also edits incorrectly charged Ser-tRNA(Ala) and Gly-tRNA(Ala) via its editing domain. This chain is Alanine--tRNA ligase, found in Bacteroides thetaiotaomicron (strain ATCC 29148 / DSM 2079 / JCM 5827 / CCUG 10774 / NCTC 10582 / VPI-5482 / E50).